Consider the following 273-residue polypeptide: MSDIEDLASGGLFDEPKDFYKPEEQPGSDSYARQEKHVAASEYKEPTNFNLRLTAKNPLWGHLLWNAGKVTSDYLDEHSKELVEGKKVIEFGAGAGLPSLLCHAVGAKQVVITDYPDADLLYNLKYNVDQLKKDWDAKNADFSGPSPCADVSSMKVEGFIWGNDASELIEMSGGTGYDLVILSDVVFNHSEHAKLVRSAKELLAPGGKVFVVFTPHRAKLFNEDLDFFRRAKDEAGFESEKLFELKYYPMFEEEEETKELRSMVFGYMLTLKE.

Residues 1–32 are disordered; that stretch reads MSDIEDLASGGLFDEPKDFYKPEEQPGSDSYA. The segment covering 14-24 has biased composition (basic and acidic residues); that stretch reads DEPKDFYKPEE. Residues W65, 92–94, D114, W161, and S183 each bind S-adenosyl-L-methionine; that span reads GAG.

This sequence belongs to the class I-like SAM-binding methyltransferase superfamily. EFM7 family.

The protein resides in the cytoplasm. Its function is as follows. S-adenosyl-L-methionine-dependent protein methyltransferase that trimethylates the N-terminal glycine 'Gly-2' of elongation factor 1-alpha, before also catalyzing the mono- and dimethylation of 'Lys-3'. The chain is Protein N-terminal and lysine N-methyltransferase EFM7 from Yarrowia lipolytica (strain CLIB 122 / E 150) (Yeast).